Here is a 370-residue protein sequence, read N- to C-terminus: MNEMTHRTKTRPVKVGNLTIGGNNELIIQSMTTTKTHDVEATVAEIKRLEEAGCQVVRVAVPDERAANAIADIKKQINIPLVADIHFDYRLALKAIEGGIDKVRINPGNIGRRHKVEAVVNAAKERGIPIRIGVNAGSLERHILEKYGYPTADGMVESALHHIKILEDLDFHDIIVSMKASDVNLAIEAYEKAARAFDYPLHLGITESGTLFAGTVKSAAGLGAILNKGIGNTLRISLSADPVEEVKVARELLKSFGLASNAATLISCPTCGRIEIDLISIANEVEEYISTLQVPIKVAVLGCAVNGPGEAREADIGIAGARGEGLLFRKGQVVRKVPEEIMVEELKKEIDVIAAEMAAEREKEKETQEQ.

[4Fe-4S] cluster contacts are provided by Cys-268, Cys-271, Cys-303, and Glu-310.

This sequence belongs to the IspG family. [4Fe-4S] cluster is required as a cofactor.

The enzyme catalyses (2E)-4-hydroxy-3-methylbut-2-enyl diphosphate + oxidized [flavodoxin] + H2O + 2 H(+) = 2-C-methyl-D-erythritol 2,4-cyclic diphosphate + reduced [flavodoxin]. The protein operates within isoprenoid biosynthesis; isopentenyl diphosphate biosynthesis via DXP pathway; isopentenyl diphosphate from 1-deoxy-D-xylulose 5-phosphate: step 5/6. Functionally, converts 2C-methyl-D-erythritol 2,4-cyclodiphosphate (ME-2,4cPP) into 1-hydroxy-2-methyl-2-(E)-butenyl 4-diphosphate. The chain is 4-hydroxy-3-methylbut-2-en-1-yl diphosphate synthase (flavodoxin) from Bacillus anthracis (strain A0248).